A 149-amino-acid polypeptide reads, in one-letter code: Transcriptional repressor NrdR (149 aa).

The segment at 3–34 (CPFCFAVDTKVIDSRLVGEGSSVRRRRQCLVC) is a zinc-finger region. One can recognise an ATP-cone domain in the interval 49–139 (PRVVKSNDVR…VYRSFEDIRE (91 aa)).

This sequence belongs to the NrdR family. Zn(2+) is required as a cofactor.

Functionally, negatively regulates transcription of bacterial ribonucleotide reductase nrd genes and operons by binding to NrdR-boxes. This chain is Transcriptional repressor NrdR, found in Cronobacter sakazakii (strain ATCC BAA-894) (Enterobacter sakazakii).